The sequence spans 575 residues: Epsin-1 (575 aa).

Arg-8, Lys-11, Arg-25, Asn-30, Arg-63, and His-73 together coordinate a 1,2-diacyl-sn-glycero-3-phospho-(1D-myo-inositol-4,5-bisphosphate). An ENTH domain is found at 12 to 144 (NIVHNYSEAE…RDEDRLREER (133 aa)). A disordered region spans residues 149–186 (KTKEKLAQTATASSAAVGSGPPPEAEQAWPQSSGEEEL). Positions 157–167 (TATASSAAVGS) are enriched in low complexity. UIM domains lie at 183–202 (EEEL…ADQP), 208–227 (EDDV…HDKE), and 233–252 (GDDL…TGGK). 2 disordered regions span residues 264–283 (FTTP…ASVP) and 293–575 (SDPW…PFLL). 8 consecutive repeat copies span residues 274–276 (DPW), 294–296 (DPW), 306–308 (DPW), 319–321 (DPW), 332–334 (DPW), 349–351 (DPW), 367–369 (DPW), and 377–379 (DPW). The interval 274–379 (DPWGGPASVP…APAPAFSDPW (106 aa)) is 8 X 3 AA repeats of D-P-W. The span at 306 to 316 (DPWGGAAPTPA) shows a compositional bias: low complexity. Low complexity predominate over residues 333-346 (PWGGTPAPAAGEGP). Residues 367–379 (DPWAPAPAFSDPW) show a composition bias toward low complexity. The residue at position 382 (Ser-382) is a Phosphoserine. Residues 401 to 410 (DEFSDFDRLR) carry the [DE]-X(1,2)-F-X-X-[FL]-X-X-X-R motif motif. A phosphoserine mark is found at Ser-418 and Ser-419. Position 420 is a phosphothreonine (Thr-420). A phosphoserine mark is found at Ser-434, Ser-446, and Ser-453. Pro residues predominate over residues 453-467 (SPPPAATPTPTPPTR). Phosphothreonine is present on residues Thr-459, Thr-463, and Thr-469. Ser-472 carries the post-translational modification Phosphoserine. A Phosphothreonine modification is found at Thr-493. 2 repeat units span residues 501–503 (NPF) and 517–519 (NPF). Residues 501–573 (NPFLPSGAPA…GPPAPNTNPF (73 aa)) are 3 X 3 AA repeats of N-P-F. Arg-533 is subject to Omega-N-methylarginine. The segment covering 556–569 (GLPPMMPPGPPAPN) has biased composition (pro residues). Copy 3 of the repeat occupies 571–573 (NPF).

It belongs to the epsin family. As to quaternary structure, monomer. Binds ITSN1. Binds clathrin, ZBTB16/ZNF145, AP2A1 and AP2A2. Binds ubiquitinated proteins. Interacts with RALBP1 in a complex also containing NUMB and TFAP2A during interphase and mitosis. Interacts with AP2B1. Interacts with UBQLN2. Interacts with REPS2; the interaction is direct. Interacts with EPS15; the interaction is direct. Interacts with ENTREP1. Post-translationally, ubiquitinated. Phosphorylated on serine and/or threonine residues in mitotic cells. Phosphorylation reduces interaction with REPS2, AP-2 and the membrane fraction. Depolarization of synaptosomes results in dephosphorylation. In terms of tissue distribution, ubiquitously expressed. Detected in liver, spleen and testis, and weakly in lung and thymus (at protein level).

The protein localises to the cytoplasm. It localises to the cell membrane. The protein resides in the nucleus. Its subcellular location is the membrane. It is found in the clathrin-coated pit. Functionally, binds to membranes enriched in phosphatidylinositol 4,5-bisphosphate (PtdIns(4,5)P2). Modifies membrane curvature and facilitates the formation of clathrin-coated invaginations. Regulates receptor-mediated endocytosis. The sequence is that of Epsin-1 (Epn1) from Rattus norvegicus (Rat).